The following is a 240-amino-acid chain: MPAGMFSIDSILAGRPSCKDSVLLHRNAPVVFSNLTESLYTAAGDFNGLYSHTGPPAPNLQSVNGRIGYNNYYYGQLHVQGPTGPACCGAIPTLGSQQCPCIPTGYDSAGSVLISPVPHQMMSYMNVGTLSRTELQLLNQLHCRRKRRHRTIFTDEQLEALENLFQETKYPDVGTREQLARKVHLREEKVEVWFKNRRAKWRRQKRSSSEESENSQKWNKSTKTTSEKIEEGKSDVDSDS.

A DNA-binding region (homeobox) is located at residues 146-205 (KRRHRTIFTDEQLEALENLFQETKYPDVGTREQLARKVHLREEKVEVWFKNRRAKWRRQK). The tract at residues 199–240 (AKWRRQKRSSSEESENSQKWNKSTKTTSEKIEEGKSDVDSDS) is disordered. A compositionally biased stretch (basic and acidic residues) spans 225-240 (TSEKIEEGKSDVDSDS).

This sequence belongs to the paired homeobox family. Bicoid subfamily.

The protein localises to the nucleus. The sequence is that of Homeobox protein goosecoid (gsc) from Danio rerio (Zebrafish).